The chain runs to 117 residues: Appetite-regulating hormone (117 aa).

The N-terminal stretch at 1-23 (MVSSATICSLLLLSMLWMDMAMA) is a signal peptide. Ser-26 carries O-decanoyl serine; alternate lipidation. Residue Ser-26 is the site of O-hexanoyl serine; alternate attachment. Ser-26 carries the O-octanoyl serine; alternate lipid modification. The segment at 28–68 (LSPEHQKAQQRKESKKPPAKLQPRALEGWLHPEDRGQAEEA) is disordered. Residues 31-43 (EHQKAQQRKESKK) are compositionally biased toward basic and acidic residues. The propeptide at 52–75 (ALEGWLHPEDRGQAEEAEEELEIR) is removed in mature form. Leu-98 is subject to Leucine amide. The propeptide at 99–117 (GKFLQDILWEEVKEAPANK) is removed in mature form.

Belongs to the motilin family. Post-translationally, O-octanoylated by GOAT/MBOAT4. O-octanoylation is essential for ghrelin activity. The replacement of Ser-26 by aromatic tryptophan preserves ghrelin activity. Amidation of Leu-98 is essential for obestatin activity. Ghrelin is broadly expressed with higher expression in the stomach. Very low levels are detected in the hypothalamus, heart, lung, pancreas, intestine and adipose tissue. Obestatin is most highly expressed in jejunum, and also found in duodenum, stomach, pituitary, ileum, liver, hypothalamus and heart. Expressed in low levels in pancreas, cerebellum, cerebrum, kidney, testis, ovary colon and lung.

It localises to the secreted. Ghrelin is the ligand for growth hormone secretagogue receptor type 1 (GHSR). Induces the release of growth hormone from the pituitary. Has an appetite-stimulating effect, induces adiposity and stimulates gastric acid secretion. Involved in growth regulation. Functionally, obestatin may be the ligand for GPR39. May have an appetite-reducing effect resulting in decreased food intake. May reduce gastric emptying activity and jejunal motility. This is Appetite-regulating hormone (Ghrl) from Rattus norvegicus (Rat).